The following is a 261-amino-acid chain: uncharacterized protein (261 aa).

Residues 1–22 form the signal peptide; it reads MKSIKRIGLCISLLILIIFVTS. Cysteine 23 is lipidated: N-palmitoyl cysteine. The S-diacylglycerol cysteine moiety is linked to residue cysteine 23.

It belongs to the staphylococcal tandem lipoprotein family.

It is found in the cell membrane. This is an uncharacterized protein from Staphylococcus aureus (strain USA300).